Consider the following 515-residue polypeptide: MRLLFFFSILYTASLCCQLKDFLPCVMQLSAQKVDFNMNPIEVIFNITTEAKLMHTCRTYSRILPCFDQKMVQCGKPSEKTQLERGKRLHSYLCAPFSLQRQKIFLRRSKCIQDVLAEPQSSVCNRNDTVFADKLQSCREMCTRPDCVSKIELSEVSTCTYINIGKKCTAEAAQFFAQMQQVLTNKEYPMQCQYDLRKKPESELKKGLPIESLVAQTTSSTTYVTVHPPALPSVIDGVVTRTSLPIMRRTDPNSKFKPRPTTSQSNGPVIKTVIVDERGAPMNQPTSTQKPKVVHKFLPNPYTTKNPNTLKNDIIRTTRTIIPVVDKHTYVPWNYKVDAVQVSTLTSALAPVKPTETVISSPPVAFNFKLPAEQTSTQPFRVEINWHDDEVKQEPTKAPGVFVSPWYLKTPSHIPPEIEFATPTPLISSPLEAVSPILSQLKSNSLNFTELGNQANNYFSAALSAFAETKKEMAHNDPWRTIIDAVAPTIHKFSPDVIPRIREEINRIQPHQQKN.

The N-terminal stretch at 1–16 is a signal peptide; that stretch reads MRLLFFFSILYTASLC. Residues Asn-46 and Asn-127 are each glycosylated (N-linked (GlcNAc...) asparagine). Residues 248 to 267 form a disordered region; the sequence is RRTDPNSKFKPRPTTSQSNG. Asn-447 carries N-linked (GlcNAc...) asparagine glycosylation.

As to expression, expressed in the terminal bulb of the pharynx and the posterior of the intestine (at protein level). Expressed by intestinal cells and secreted into the intestinal lumen (at protein level).

Its subcellular location is the secreted. Its function is as follows. Plays a role in promoting resistance to bacterial pathogens such as P.aeruginosa by inhibiting bacterial intestinal colonization. (Microbial infection) Promotes infection by microsporidian pathogens such as N.parisii in the early larval stages of development. Involved in ensuring the proper orientation and location of the spore proteins of N.parisii during intestinal cell invasion. The polypeptide is Protein aaim-1 (Caenorhabditis elegans).